A 262-amino-acid chain; its full sequence is Nurim (262 aa).

The Nuclear segment spans residues 1–4 (MAPA). Residues 5-28 (LLLVPAALASFILAFGTGVEFVRF) traverse the membrane as a helical segment. The Perinuclear space portion of the chain corresponds to 29 to 58 (TSLRPLLGGIPESGGPDARQGWLAALQDQS). Residues 59–80 (ILVPLAWDLGLLLLFVGQHSLM) traverse the membrane as a helical segment. Topologically, residues 81–97 (ATETVKAWMSRYFGVLQ) are nuclear. Residues 98–114 (RSLYVACTALALQLVMR) form a helical membrane-spanning segment. Residues 115–133 (YWEPVPRGPVLWEAQAEPW) are Perinuclear space-facing. A helical membrane pass occupies residues 134–164 (ATWVPLLCFVLHVISWLLIFSILLVFDYAEL). The Nuclear segment spans residues 165 to 191 (MGLKQVYYHVLGLGEPLALKSPRALRL). Residues 192 to 210 (FSHLRHPVCVELLTVLWVV) traverse the membrane as a helical segment. The Perinuclear space segment spans residues 211 to 216 (PTLGTD). The chain crosses the membrane as a helical span at residues 217–234 (RLLLALLLTLYLGLAHGL). Residues 235–262 (DQQDLRYLRAQLQRKLHLLSRPQDGEAE) lie on the Nuclear side of the membrane.

It belongs to the nurim family.

It is found in the nucleus inner membrane. This is Nurim (NRM) from Sus scrofa (Pig).